The chain runs to 1092 residues: Electroneutral sodium bicarbonate exchanger 1 (1092 aa).

3 disordered regions span residues 1-26 (MPAG…VDQG), 55-95 (LGRQ…HDTP), and 243-263 (KKQS…PQSA). At 1 to 478 (MPAGSNEPDG…DYRDALSLQC (478 aa)) the chain is on the extracellular side. Residues 58 to 76 (QSHRHHRTHGQKHRRRGGR) are compositionally biased toward basic residues. Positions 243 to 255 (KKQSDPHSMDRDG) are enriched in basic and acidic residues. The chain crosses the membrane as a helical span at residues 479 to 499 (LASFLFLYCACMSPVITFGGL). The Cytoplasmic segment spans residues 500–507 (LGEATEGR). The chain crosses the membrane as a helical span at residues 508–528 (ISAIESLFGASMTGIAYSLFA). Residues 529 to 565 (GQPLTILGSTGPVLVFEKILFKFCKDYALSYLSLRAC) are Extracellular-facing. The helical transmembrane segment at 566 to 586 (IGLWTAFLCIVLVATDASSLV) threads the bilayer. Topologically, residues 587–595 (CYITRFTEE) are cytoplasmic. A helical transmembrane segment spans residues 596–616 (AFASLICIIFIYEAIEKLIHL). Residues 617–687 (AETYPIHMHS…EFIGSACGHH (71 aa)) are Extracellular-facing. Intrachain disulfides connect C636-C684 and C638-C672. 2 N-linked (GlcNAc) asparagine glycosylation sites follow: N646 and N666. The chain crosses the membrane as a helical span at residues 688-708 (GPYTPDVLFWSCILFFATFIV). Residues 709–731 (SSTLKTFKTSRYFPTRVRSTVSD) lie on the Cytoplasmic side of the membrane. The chain crosses the membrane as a helical span at residues 732–752 (FAVFLTIFTMVILDFLIGVPS). Over 753-778 (PKLQVPSVFKPTRDDRGWFISPIGPN) the chain is Extracellular. Residues 779-799 (PWWTVIAAIIPALLCTILIFM) form a helical membrane-spanning segment. Topologically, residues 800 to 824 (DQQITAVIINRKEHKLKKGCGYHLD) are cytoplasmic. A helical membrane pass occupies residues 825–845 (LLVVAIMLGVCSLMGLPWFVA). Residues 846 to 881 (ATVLSITHVNSLKLESECSAPGEQPKFLGIREQRVT) are Extracellular-facing. Residues 882 to 902 (GLMIFVLMGCSVFMTAVLKFI) traverse the membrane as a helical segment. Topologically, residues 903–904 (PM) are cytoplasmic. Residues 905 to 925 (PVLYGVFLYMGVSSLQGIQFF) traverse the membrane as a helical segment. Over 926 to 962 (DRLKLFGMPAKHQPDFIYLRHVPLRKVHLFTLVQLTC) the chain is Extracellular. The chain crosses the membrane as a helical span at residues 963–983 (LVLLWVIKASPAAIVFPMMVL). Residues 984 to 1092 (ALVFVRKVMD…GNTKEKSPFN (109 aa)) lie on the Cytoplasmic side of the membrane.

Belongs to the anion exchanger (TC 2.A.31) family. In terms of assembly, homodimer. Expressed in the Purkinje cells and dendrites in the molecular layer of the cerebellum (at protein level). Expressed in the hippocampal neurons (at protein level). Strong expression observed in testis and moderate expression in kidney inner medulla, the submandibular gland, eye, cerebrum and cerebellum.

It is found in the cell membrane. The protein localises to the apical cell membrane. The protein resides in the basolateral cell membrane. Its subcellular location is the cytoplasmic vesicle. It localises to the secretory vesicle. It is found in the synaptic vesicle membrane. The enzyme catalyses 2 hydrogencarbonate(out) + chloride(in) + Na(+)(out) = 2 hydrogencarbonate(in) + chloride(out) + Na(+)(in). In terms of biological role, mediates electroneutral sodium- and carbonate-dependent chloride-HCO3(-) exchange with a Na(+):HCO3(-) stoichiometry of 2:1. Plays a major role in pH regulation in neurons. Mediates sodium reabsorption in the renal cortical collecting ducts. This chain is Electroneutral sodium bicarbonate exchanger 1, found in Rattus norvegicus (Rat).